The sequence spans 1046 residues: Suppressor of Mek1 (1046 aa).

The WH1 domain occupies 1 to 101 (MEPLRKRVKV…QDIWENILQY (101 aa)). The segment at 626–1046 (FESPETSCNN…SSPTPSELHV (421 aa)) is disordered. Residues 665 to 689 (IDEEEEEAYFNRDDDSEDSDDEDEL) show a composition bias toward acidic residues. Over residues 695-713 (NNNNNNNNNNKQICTNNEN) the composition is skewed to low complexity. Basic and acidic residues predominate over residues 714–727 (NMEKNDDNIEKDNE). A compositionally biased stretch (acidic residues) spans 743–752 (YEDEDDEDDE). Residues 753-783 (INKSVESDDIVEKHEIIDKNEKKDEIMKENN) show a composition bias toward basic and acidic residues. A compositionally biased stretch (acidic residues) spans 784 to 803 (DSDNDDNDNNDNDNDNDNNS). Positions 804 to 820 (DIENKNHLNNNGNNENN) are enriched in low complexity. Basic and acidic residues-rich tracts occupy residues 826 to 855 (VQDK…KENL) and 862 to 876 (EKVK…KKEN). A compositionally biased stretch (low complexity) spans 889 to 905 (SNNSNNNNNNNNNNSNN). A compositionally biased stretch (basic and acidic residues) spans 909 to 935 (GDNRKTTPKRKLDYEKNESVVSKKIDK). Residues 958 to 995 (NNNNSNNNNNNNNNNNNNNNNNNNNNNNNNNNNNNNQN) are compositionally biased toward low complexity. The segment covering 996–1011 (DENELSSASEEEEEQL) has biased composition (acidic residues). A Nuclear localization signal motif is present at residues 1003 to 1022 (ASEEEEEQLENGKHIKKFKR). Positions 1028–1038 (NNSSNNSNNSS) are enriched in low complexity.

Belongs to the SMEK family. In terms of assembly, interacts with ppp4c.

The protein localises to the cytoplasm. It localises to the cell cortex. It is found in the nucleus. Its function is as follows. Suppresses MEK1 null cell polarity, chemotaxis, and gene expression defects. Required for proper cytokinesis during vegetative growth, timely exit from the mound stage during development, and myosin II assembly. May be a regulatory subunit of serine/threonine-protein phosphatase 4 (PP4) and may control localization of PP4 to the nucleus. Involved in the regulation of some ppp4c functions, such as developmental progression, chemotaxis, expression of stress response genes and cell movement. The chain is Suppressor of Mek1 (smkA) from Dictyostelium discoideum (Social amoeba).